A 395-amino-acid polypeptide reads, in one-letter code: Protein BUR2 (395 aa).

Disordered regions lie at residues 1–31 (MSAT…ASSG) and 372–395 (AKQE…KPKI). Residue serine 24 is modified to Phosphoserine.

As to quaternary structure, belongs to the BUR kinase complex composed of SGV1/BUR1 and BUR2. Interacts with SGV1.

It localises to the nucleus. In terms of biological role, component of the BUR kinase complex involved in transcription regulation. This complex phosphorylates 'Ser-120' of the UBC2/RAD6 ubiquitin-conjugating enzyme (E2), leading to monoubiquitination of histone H2B, the localization of the PAF1 complex to the chromatin, and the silencing of telomeric-associated genes. Also required for histone H3 'Lys-4' trimethylation. May phosphorylate the 'Ser-5' of the RBP1 carboxy-terminal domain (CTD) repeats. Necessary for the recovery from pheromone-induced growth arrest in the cell cycle G1 phase. Also required for vegetative growth itself. The kinase activity of the complex requires the presence of BUR2. Overexpression of BUR2 interferes with mitotic chromosome segregation. The sequence is that of Protein BUR2 (BUR2) from Saccharomyces cerevisiae (strain ATCC 204508 / S288c) (Baker's yeast).